Here is a 150-residue protein sequence, read N- to C-terminus: Globin-2 (150 aa).

The Globin domain maps to 11-150 (PLSDAEKNKI…MICILLSSAY (140 aa)). 2 residues coordinate heme b: histidine 74 and histidine 106.

It belongs to the globin family. In terms of assembly, monomer.

The chain is Globin-2 from Mordacia mordax (Southern hemisphere lamprey).